Here is a 77-residue protein sequence, read N- to C-terminus: Ubiquitin-like protein NEDD8 (77 aa).

Residues 70–72 are interaction with uba-3; that stretch reads VLA. Gly76 is covalently cross-linked (Glycyl lysine isopeptide (Gly-Lys) (interchain with K-? in acceptor proteins)). Phe77 is a propeptide.

It belongs to the ubiquitin family. Interacts with dcn-1. Covalently attached to cullins. May interact with atx-3. Post-translationally, cleavage of precursor form is necessary for function.

It localises to the nucleus. The protein localises to the cytoplasm. Functionally, ubiquitin-like protein which plays an important role in cell cycle control and embryogenesis. Covalent attachment to its substrates requires prior activation by the E1 complex uba-3-ula-1 and linkage to the E2 enzyme ubc-12. Attachment of ned-8 to cullins activates their associated E3 ubiquitin ligase activity, and thus promotes polyubiquitination and proteasomal degradation of cyclins and other regulatory proteins. This is Ubiquitin-like protein NEDD8 (ned-8) from Caenorhabditis elegans.